The chain runs to 660 residues: UvrABC system protein B (660 aa).

In terms of domain architecture, Helicase ATP-binding spans 27–414 (NGVNEGKRHQ…TDEMVQQIIR (388 aa)). 40–47 (GATGTGKT) lines the ATP pocket. The short motif at 93–116 (YYDYYQPEAYVPSTDTFIEKDASI) is the Beta-hairpin element. Residues 431–593 (QIDDLLGEIQ…ITPTTINKKI (163 aa)) enclose the Helicase C-terminal domain. A disordered region spans residues 603-622 (NDETNEQQQTEVPKKMTKKE). One can recognise a UVR domain in the interval 624–659 (EKTIANIEKEMKQAAKDLDFEKATELRDMLFELKAE).

It belongs to the UvrB family. In terms of assembly, forms a heterotetramer with UvrA during the search for lesions. Interacts with UvrC in an incision complex.

It localises to the cytoplasm. Functionally, the UvrABC repair system catalyzes the recognition and processing of DNA lesions. A damage recognition complex composed of 2 UvrA and 2 UvrB subunits scans DNA for abnormalities. Upon binding of the UvrA(2)B(2) complex to a putative damaged site, the DNA wraps around one UvrB monomer. DNA wrap is dependent on ATP binding by UvrB and probably causes local melting of the DNA helix, facilitating insertion of UvrB beta-hairpin between the DNA strands. Then UvrB probes one DNA strand for the presence of a lesion. If a lesion is found the UvrA subunits dissociate and the UvrB-DNA preincision complex is formed. This complex is subsequently bound by UvrC and the second UvrB is released. If no lesion is found, the DNA wraps around the other UvrB subunit that will check the other stand for damage. The protein is UvrABC system protein B of Staphylococcus saprophyticus subsp. saprophyticus (strain ATCC 15305 / DSM 20229 / NCIMB 8711 / NCTC 7292 / S-41).